The chain runs to 76 residues: Antimicrobial peptide Smp24 (76 aa).

Positions 1-22 (MQYKTFLVIFMAYLLVTHEAEA) are cleaved as a signal peptide. A propeptide spanning residues 47–76 (SKRKRDVEDFFDPYQRDLDLELERLLSQLQ) is cleaved from the precursor.

Belongs to the non-disulfide-bridged peptide (NDBP) superfamily. Medium-length antimicrobial peptide (group 3) family. Expressed by the venom gland.

The protein localises to the secreted. The protein resides in the target cell membrane. Peptide that shows antimicrobial activity, moderate cytolysis on eukaryote cells and interference with DNA synthesis. Has potent activity against Gram-positive bacteria and moderate activity against Gram-negative bacteria, as well as moderate activity against fungi. Acts by inducing bacterial membrane disruption. Uses multiple modes of action depending on the membrane lipid composition. Uses a toroidal pore mechanism against the prokaryotic like membrane and forms hexagonal phase non-lamellar structures in eukaryotic-like membrane. Shows activity against B.subtilis (MIC=4 ug/ml), S.epidermidis (MIC=8 ug/ml), S.aureus (MIC=8 ug/ml), E.coli (MIC=64 ug/ml), K.pneumoniae (MIC=128 ug/ml), P.aeruginosa (MIC=256 ug/ml), and C.albicans (MIC=32 ug/ml). Shows moderate hemolysis activity. This Scorpio palmatus (Israeli golden scorpion) protein is Antimicrobial peptide Smp24.